The following is a 370-amino-acid chain: 3-isopropylmalate dehydrogenase (370 aa).

77-90 (GPKWDGVPYDARPE) provides a ligand contact to NAD(+). Substrate is bound by residues Arg97, Arg107, Arg135, and Asp226. Mg(2+) is bound by residues Asp226, Asp250, and Asp254. 290–302 (GSAPDIAGKGMAN) contributes to the NAD(+) binding site.

Belongs to the isocitrate and isopropylmalate dehydrogenases family. LeuB type 1 subfamily. Homodimer. Requires Mg(2+) as cofactor. The cofactor is Mn(2+).

The protein localises to the cytoplasm. The catalysed reaction is (2R,3S)-3-isopropylmalate + NAD(+) = 4-methyl-2-oxopentanoate + CO2 + NADH. Its pathway is amino-acid biosynthesis; L-leucine biosynthesis; L-leucine from 3-methyl-2-oxobutanoate: step 3/4. Catalyzes the oxidation of 3-carboxy-2-hydroxy-4-methylpentanoate (3-isopropylmalate) to 3-carboxy-4-methyl-2-oxopentanoate. The product decarboxylates to 4-methyl-2 oxopentanoate. This Rhodopseudomonas palustris (strain ATCC BAA-98 / CGA009) protein is 3-isopropylmalate dehydrogenase.